A 501-amino-acid chain; its full sequence is Dihydrolipoyl dehydrogenase, mitochondrial (501 aa).

The N-terminal 31 residues, 1–31, are a transit peptide targeting the mitochondrion; sequence MAMANLARRKGYSLLSSETLRYSFSLRSRAF. FAD contacts are provided by residues 67–76, K85, G149, and 178–180; these read EKRGALGGTC and TGS. C76 and C81 form a disulfide bridge. Residues 215–222, E238, V272, and G307 contribute to the NAD(+) site; that span reads GAGYIGLE. Residues D348 and 354–357 contribute to the FAD site; that span reads MLAH. H480 functions as the Proton acceptor in the catalytic mechanism.

Belongs to the class-I pyridine nucleotide-disulfide oxidoreductase family. Homodimer. The cofactor is FAD.

Its subcellular location is the mitochondrion matrix. It catalyses the reaction N(6)-[(R)-dihydrolipoyl]-L-lysyl-[protein] + NAD(+) = N(6)-[(R)-lipoyl]-L-lysyl-[protein] + NADH + H(+). Its function is as follows. Lipoamide dehydrogenase is a component of the glycine cleavage system as well as of the alpha-ketoacid dehydrogenase complexes. The pyruvate dehydrogenase complex contains multiple copies of three enzymatic components: pyruvate dehydrogenase (E1), dihydrolipoamide acetyltransferase (E2) and lipoamide dehydrogenase (E3). The polypeptide is Dihydrolipoyl dehydrogenase, mitochondrial (LPD) (Pisum sativum (Garden pea)).